The chain runs to 271 residues: Imidazole glycerol phosphate synthase subunit HisF (271 aa).

Catalysis depends on residues aspartate 12 and aspartate 136.

This sequence belongs to the HisA/HisF family. Heterodimer of HisH and HisF.

It is found in the cytoplasm. It catalyses the reaction 5-[(5-phospho-1-deoxy-D-ribulos-1-ylimino)methylamino]-1-(5-phospho-beta-D-ribosyl)imidazole-4-carboxamide + L-glutamine = D-erythro-1-(imidazol-4-yl)glycerol 3-phosphate + 5-amino-1-(5-phospho-beta-D-ribosyl)imidazole-4-carboxamide + L-glutamate + H(+). It functions in the pathway amino-acid biosynthesis; L-histidine biosynthesis; L-histidine from 5-phospho-alpha-D-ribose 1-diphosphate: step 5/9. Functionally, IGPS catalyzes the conversion of PRFAR and glutamine to IGP, AICAR and glutamate. The HisF subunit catalyzes the cyclization activity that produces IGP and AICAR from PRFAR using the ammonia provided by the HisH subunit. The sequence is that of Imidazole glycerol phosphate synthase subunit HisF from Haloarcula marismortui (strain ATCC 43049 / DSM 3752 / JCM 8966 / VKM B-1809) (Halobacterium marismortui).